Reading from the N-terminus, the 681-residue chain is MDERRSSIFSTNIPCRNEQLYGRCPYIDKGCFFQHKNQDNAPASSKPPSATAIDPQNSGFSTKLSINSPSFTPLKLSKTSISSASNKESVPLTRPKSYSSALSSGKNGAAAQQAANSPKTVSLMTSSSKAANALQTHKSSLARAASAVPFSPSKATTVSLKESASLTSLSNNKSVSNLNSISGASSPSGSLVNLHSLTRSASFVPQPSVPNSGQLSNADMSRHILARFPPFFHNLNEQQQKTTSFFLADDHLKWFTYLTQEFYQFANIPKLPSHVLSYHSLIPRRMIVTVLPVLRYATSIYKVIDGNNGLPYSFVQLRDFTLLNDRNITNVSPWTKVDSPHVIKIREAFTTHAFEQKSIVFVYNYLPSCPSLYDLFFASPVFRKRTSSFYFSQPLKATKEVLWCFASQLISALYSIHSSGLAAKMVSLKNVLMVGKMRLAIFGLGIMDVIQEESTEPLTSLQRNDCRDVGLILLALATDTENVTLSTAKAHLTRLKTIVSTDASLVELIEVLIFNEELRIQTLLPTMLSYMVNNYESVLLMEDVYETYLAEQVENDRLLRLLLKLEFLDDRPEYVDDPDWSASGVYFVIRLFRKYMFQVQTIDDASKKPTLQSTTTPPRKLLNKAHLLSCLNKLDAGTDEQILLEDEFTRIIMSFKEVKTTINTAFMELERRCSNNLSVKK.

The segment at 9-38 adopts a C3H1-type zinc-finger fold; sequence FSTNIPCRNEQLYGRCPYIDKGCFFQHKNQ. Disordered regions lie at residues 38–58 and 82–123; these read QDNA…PQNS and SSAS…TVSL. Positions 41–50 are enriched in low complexity; that stretch reads APASSKPPSA. Over residues 96 to 106 the composition is skewed to polar residues; the sequence is KSYSSALSSGK. Position 165 is a phosphoserine (Ser-165).

This sequence belongs to the protein kinase superfamily. PAN3 family.

It is found in the cytoplasm. In terms of biological role, regulatory subunit of the poly(A)-nuclease (PAN) deadenylation complex. In Schizosaccharomyces pombe (strain 972 / ATCC 24843) (Fission yeast), this protein is PAB-dependent poly(A)-specific ribonuclease subunit pan3-like.